A 156-amino-acid chain; its full sequence is Ribosomal RNA large subunit methyltransferase H (156 aa).

S-adenosyl-L-methionine is bound by residues Leu73, Gly104, and 123–128 (LSKLTL).

This sequence belongs to the RNA methyltransferase RlmH family. As to quaternary structure, homodimer.

The protein localises to the cytoplasm. It carries out the reaction pseudouridine(1915) in 23S rRNA + S-adenosyl-L-methionine = N(3)-methylpseudouridine(1915) in 23S rRNA + S-adenosyl-L-homocysteine + H(+). Its function is as follows. Specifically methylates the pseudouridine at position 1915 (m3Psi1915) in 23S rRNA. In Idiomarina loihiensis (strain ATCC BAA-735 / DSM 15497 / L2-TR), this protein is Ribosomal RNA large subunit methyltransferase H.